We begin with the raw amino-acid sequence, 182 residues long: ATP-dependent protease subunit HslV (182 aa).

The active site involves Thr10. Ala166, Cys169, and Ser172 together coordinate Na(+).

It belongs to the peptidase T1B family. HslV subfamily. A double ring-shaped homohexamer of HslV is capped on each side by a ring-shaped HslU homohexamer. The assembly of the HslU/HslV complex is dependent on binding of ATP.

The protein resides in the cytoplasm. It catalyses the reaction ATP-dependent cleavage of peptide bonds with broad specificity.. Allosterically activated by HslU binding. Its function is as follows. Protease subunit of a proteasome-like degradation complex believed to be a general protein degrading machinery. The protein is ATP-dependent protease subunit HslV of Rickettsia peacockii (strain Rustic).